A 140-amino-acid chain; its full sequence is Profilin-1 (140 aa).

Residue A2 is modified to N-acetylalanine. S28 carries the phosphoserine modification. K54 participates in a covalent cross-link: Glycyl lysine isopeptide (Lys-Gly) (interchain with G-Cter in SUMO2); alternate. K54 is covalently cross-linked (Glycyl lysine isopeptide (Lys-Gly) (interchain with G-Cter in ubiquitin); alternate). S57 and S85 each carry phosphoserine. N6-acetyllysine is present on residues K105 and K108. At Y129 the chain carries Phosphotyrosine. At S138 the chain carries Phosphoserine; by ROCK1.

Belongs to the profilin family. As to quaternary structure, found in a complex with XPO6, Ran, ACTB and PFN1. Interacts with ACTB. Interacts with VASP. Interacts with HTT. Interacts with SH3BGRL. Occurs in many kinds of cells as a complex with monomeric actin in a 1:1 ratio. Interacts with ACTMAP. Phosphorylation at Ser-138 reduces its affinity for G-actin and blocks its interaction with HTT, reducing its ability to inhibit androgen receptor (AR) and HTT aggregation. Expressed in epididymis (at protein level).

The protein localises to the cytoplasm. Its subcellular location is the cytoskeleton. Functionally, binds to actin and affects the structure of the cytoskeleton. At high concentrations, profilin prevents the polymerization of actin, whereas it enhances it at low concentrations. By binding to PIP2, it inhibits the formation of IP3 and DG. Inhibits androgen receptor (AR) and HTT aggregation and binding of G-actin is essential for its inhibition of AR. This Homo sapiens (Human) protein is Profilin-1 (PFN1).